Here is a 155-residue protein sequence, read N- to C-terminus: SsrA-binding protein (155 aa).

Belongs to the SmpB family.

Its subcellular location is the cytoplasm. Its function is as follows. Required for rescue of stalled ribosomes mediated by trans-translation. Binds to transfer-messenger RNA (tmRNA), required for stable association of tmRNA with ribosomes. tmRNA and SmpB together mimic tRNA shape, replacing the anticodon stem-loop with SmpB. tmRNA is encoded by the ssrA gene; the 2 termini fold to resemble tRNA(Ala) and it encodes a 'tag peptide', a short internal open reading frame. During trans-translation Ala-aminoacylated tmRNA acts like a tRNA, entering the A-site of stalled ribosomes, displacing the stalled mRNA. The ribosome then switches to translate the ORF on the tmRNA; the nascent peptide is terminated with the 'tag peptide' encoded by the tmRNA and targeted for degradation. The ribosome is freed to recommence translation, which seems to be the essential function of trans-translation. The protein is SsrA-binding protein of Streptococcus suis (strain 98HAH33).